Consider the following 201-residue polypeptide: MSGVNDIRSTFLDYFKKNGHEIVPSSPLVPRNDPTLMFTNAGMVQFKNVFTGLEKRSYSTATTSQKCVRVGGKHNDLDNVGYTARHLTFFEMLGNFSFGDYFKENAIELAWKLVTEGFDLPKHRLLVTVYSEDEEAATLWKKIAGFSDDKIIRISTSDNFWQMGDTGPCGPCSEIFIDQGENVWGGPPGSPEEDGDRFLEF.

This sequence belongs to the class-II aminoacyl-tRNA synthetase family. It depends on Zn(2+) as a cofactor.

It is found in the cytoplasm. It carries out the reaction tRNA(Ala) + L-alanine + ATP = L-alanyl-tRNA(Ala) + AMP + diphosphate. Catalyzes the attachment of alanine to tRNA(Ala) in a two-step reaction: alanine is first activated by ATP to form Ala-AMP and then transferred to the acceptor end of tRNA(Ala). Also edits incorrectly charged Ser-tRNA(Ala) and Gly-tRNA(Ala) via its editing domain. This is Alanine--tRNA ligase (alaS) from Rhizobium leguminosarum bv. viciae.